The chain runs to 385 residues: Flap endonuclease 1 (385 aa).

An N-domain region spans residues 1-104 (MGILGLSKLI…GELAKRAERR (104 aa)). Aspartate 34 provides a ligand contact to Mg(2+). DNA is bound by residues arginine 47 and arginine 70. 5 residues coordinate Mg(2+): aspartate 86, glutamate 158, glutamate 160, aspartate 179, and aspartate 181. The tract at residues 122 to 253 (GIEKFNRRLV…KRAIELINTY (132 aa)) is I-domain. Glutamate 158 is a binding site for DNA. Positions 231 and 233 each coordinate DNA. Aspartate 233 is a Mg(2+) binding site. The segment at 336 to 344 (TQVRLDSFF) is interaction with PCNA. Residues 346–385 (TLPSTPNATNAAKRKAEEAKKSANNKKAKTSGGGRGRRPK) form a disordered region. Over residues 368 to 385 (ANNKKAKTSGGGRGRRPK) the composition is skewed to basic residues.

It belongs to the XPG/RAD2 endonuclease family. FEN1 subfamily. As to quaternary structure, interacts with PCNA. Three molecules of FEN1 bind to one PCNA trimer with each molecule binding to one PCNA monomer. PCNA stimulates the nuclease activity without altering cleavage specificity. Requires Mg(2+) as cofactor. Post-translationally, phosphorylated. Phosphorylation upon DNA damage induces relocalization to the nuclear plasma.

Its subcellular location is the nucleus. It localises to the nucleolus. The protein resides in the nucleoplasm. The protein localises to the mitochondrion. In terms of biological role, structure-specific nuclease with 5'-flap endonuclease and 5'-3' exonuclease activities involved in DNA replication and repair. During DNA replication, cleaves the 5'-overhanging flap structure that is generated by displacement synthesis when DNA polymerase encounters the 5'-end of a downstream Okazaki fragment. It enters the flap from the 5'-end and then tracks to cleave the flap base, leaving a nick for ligation. Also involved in the long patch base excision repair (LP-BER) pathway, by cleaving within the apurinic/apyrimidinic (AP) site-terminated flap. Acts as a genome stabilization factor that prevents flaps from equilibrating into structures that lead to duplications and deletions. Also possesses 5'-3' exonuclease activity on nicked or gapped double-stranded DNA, and exhibits RNase H activity. Also involved in replication and repair of rDNA and in repairing mitochondrial DNA. The polypeptide is Flap endonuclease 1 (Drosophila melanogaster (Fruit fly)).